A 176-amino-acid polypeptide reads, in one-letter code: Endoribonuclease YbeY (176 aa).

Residues histidine 139, histidine 143, and histidine 149 each contribute to the Zn(2+) site.

The protein belongs to the endoribonuclease YbeY family. Zn(2+) serves as cofactor.

It localises to the cytoplasm. Functionally, single strand-specific metallo-endoribonuclease involved in late-stage 70S ribosome quality control and in maturation of the 3' terminus of the 16S rRNA. The polypeptide is Endoribonuclease YbeY (Acaryochloris marina (strain MBIC 11017)).